Consider the following 326-residue polypeptide: Ribosomal RNA small subunit methyltransferase H (326 aa).

S-adenosyl-L-methionine is bound by residues 35–37 (GGY), Asp53, Phe80, Asp101, and Gln108. The segment at 260 to 306 (EGVSRHLPQASNAGAGNPPPSFQAVSRRAVKPLDAETRVNPRSRSAR) is disordered.

This sequence belongs to the methyltransferase superfamily. RsmH family.

The protein resides in the cytoplasm. It carries out the reaction cytidine(1402) in 16S rRNA + S-adenosyl-L-methionine = N(4)-methylcytidine(1402) in 16S rRNA + S-adenosyl-L-homocysteine + H(+). Its function is as follows. Specifically methylates the N4 position of cytidine in position 1402 (C1402) of 16S rRNA. The chain is Ribosomal RNA small subunit methyltransferase H from Rhodospirillum rubrum (strain ATCC 11170 / ATH 1.1.1 / DSM 467 / LMG 4362 / NCIMB 8255 / S1).